The sequence spans 425 residues: Enolase (425 aa).

Q162 contributes to the (2R)-2-phosphoglycerate binding site. Residue E204 is the Proton donor of the active site. Mg(2+)-binding residues include D241, E282, and D309. 4 residues coordinate (2R)-2-phosphoglycerate: K334, R363, S364, and K385. K334 acts as the Proton acceptor in catalysis.

Belongs to the enolase family. Mg(2+) is required as a cofactor.

The protein localises to the cytoplasm. The protein resides in the secreted. It localises to the cell surface. It catalyses the reaction (2R)-2-phosphoglycerate = phosphoenolpyruvate + H2O. It functions in the pathway carbohydrate degradation; glycolysis; pyruvate from D-glyceraldehyde 3-phosphate: step 4/5. Its function is as follows. Catalyzes the reversible conversion of 2-phosphoglycerate (2-PG) into phosphoenolpyruvate (PEP). It is essential for the degradation of carbohydrates via glycolysis. This Corynebacterium jeikeium (strain K411) protein is Enolase.